Consider the following 262-residue polypeptide: Tropinone reductase homolog At2g29310 (262 aa).

13 to 37 (LVTGAASGIGYAIVEELASFGAIIH) contributes to the NADP(+) binding site. Ser146 contributes to the substrate binding site. The Proton acceptor role is filled by Tyr159.

It belongs to the short-chain dehydrogenases/reductases (SDR) family. SDR65C subfamily.

This Arabidopsis thaliana (Mouse-ear cress) protein is Tropinone reductase homolog At2g29310.